Reading from the N-terminus, the 215-residue chain is Probable transaldolase (215 aa).

Catalysis depends on lysine 83, which acts as the Schiff-base intermediate with substrate.

It belongs to the transaldolase family. Type 3B subfamily.

The protein localises to the cytoplasm. It carries out the reaction D-sedoheptulose 7-phosphate + D-glyceraldehyde 3-phosphate = D-erythrose 4-phosphate + beta-D-fructose 6-phosphate. Its pathway is carbohydrate degradation; pentose phosphate pathway; D-glyceraldehyde 3-phosphate and beta-D-fructose 6-phosphate from D-ribose 5-phosphate and D-xylulose 5-phosphate (non-oxidative stage): step 2/3. Its function is as follows. Transaldolase is important for the balance of metabolites in the pentose-phosphate pathway. This Bdellovibrio bacteriovorus (strain ATCC 15356 / DSM 50701 / NCIMB 9529 / HD100) protein is Probable transaldolase.